The chain runs to 611 residues: Elongation factor 4 (611 aa).

A tr-type G domain is found at 12 to 193 (AVIRNFCIIA…TIVAKVPAPE (182 aa)). Residues 24 to 29 (DHGKST) and 140 to 143 (NKID) contribute to the GTP site.

It belongs to the TRAFAC class translation factor GTPase superfamily. Classic translation factor GTPase family. LepA subfamily.

Its subcellular location is the cell membrane. It catalyses the reaction GTP + H2O = GDP + phosphate + H(+). Its function is as follows. Required for accurate and efficient protein synthesis under certain stress conditions. May act as a fidelity factor of the translation reaction, by catalyzing a one-codon backward translocation of tRNAs on improperly translocated ribosomes. Back-translocation proceeds from a post-translocation (POST) complex to a pre-translocation (PRE) complex, thus giving elongation factor G a second chance to translocate the tRNAs correctly. Binds to ribosomes in a GTP-dependent manner. The chain is Elongation factor 4 from Cutibacterium acnes (strain DSM 16379 / KPA171202) (Propionibacterium acnes).